Consider the following 146-residue polypeptide: Benzoylsuccinyl-CoA thiolase subunit BbsA (146 aa).

4 residues coordinate Zn(2+): Cys42, Cys45, Cys55, and Cys58.

The protein belongs to the BbsA family. As to quaternary structure, heterotetramer composed of two BbsA subunits and two BbsB subunits. Both BbsA and BbsB are essential for enzymatic activity.

It catalyses the reaction (S)-2-benzoylsuccinyl-CoA + CoA = benzoyl-CoA + succinyl-CoA. It participates in xenobiotic degradation; toluene degradation. Component of the BbsAB thiolase complex, which catalyzes the thiolytic cleavage of (S)-2-benzoylsuccinyl-CoA to succinyl-CoA and benzoyl-CoA, the final step of anaerobic toluene metabolism. The BbsA subunit critically contributes to an induced-fit process for productive binding of a CoA substrate into the active site of BbsB. In Geobacter metallireducens (strain ATCC 53774 / DSM 7210 / GS-15), this protein is Benzoylsuccinyl-CoA thiolase subunit BbsA.